A 159-amino-acid polypeptide reads, in one-letter code: Large ribosomal subunit protein bL17 (159 aa).

The span at 124–135 (EANRATRAAASK) shows a compositional bias: low complexity. Residues 124–159 (EANRATRAAASKQAEEAKAEEAEATEAEAEETTEEK) form a disordered region. A compositionally biased stretch (acidic residues) spans 145-159 (AEATEAEAEETTEEK).

It belongs to the bacterial ribosomal protein bL17 family. As to quaternary structure, part of the 50S ribosomal subunit. Contacts protein L32.

This is Large ribosomal subunit protein bL17 from Corynebacterium aurimucosum (strain ATCC 700975 / DSM 44827 / CIP 107346 / CN-1) (Corynebacterium nigricans).